The chain runs to 322 residues: Phosphatidylserine decarboxylase proenzyme (322 aa).

Active-site charge relay system; for autoendoproteolytic cleavage activity residues include D90, H147, and S254. S254 (schiff-base intermediate with substrate; via pyruvic acid; for decarboxylase activity) is an active-site residue. S254 is modified (pyruvic acid (Ser); by autocatalysis). The segment at 294-322 (EVEPVPLPEEEIKAEHDASPLVDDKKDET) is disordered. Residues 303 to 322 (EEIKAEHDASPLVDDKKDET) are compositionally biased toward basic and acidic residues.

It belongs to the phosphatidylserine decarboxylase family. PSD-B subfamily. Prokaryotic type I sub-subfamily. Heterodimer of a large membrane-associated beta subunit and a small pyruvoyl-containing alpha subunit. It depends on pyruvate as a cofactor. Is synthesized initially as an inactive proenzyme. Formation of the active enzyme involves a self-maturation process in which the active site pyruvoyl group is generated from an internal serine residue via an autocatalytic post-translational modification. Two non-identical subunits are generated from the proenzyme in this reaction, and the pyruvate is formed at the N-terminus of the alpha chain, which is derived from the carboxyl end of the proenzyme. The autoendoproteolytic cleavage occurs by a canonical serine protease mechanism, in which the side chain hydroxyl group of the serine supplies its oxygen atom to form the C-terminus of the beta chain, while the remainder of the serine residue undergoes an oxidative deamination to produce ammonia and the pyruvoyl prosthetic group on the alpha chain. During this reaction, the Ser that is part of the protease active site of the proenzyme becomes the pyruvoyl prosthetic group, which constitutes an essential element of the active site of the mature decarboxylase.

It is found in the cell membrane. It catalyses the reaction a 1,2-diacyl-sn-glycero-3-phospho-L-serine + H(+) = a 1,2-diacyl-sn-glycero-3-phosphoethanolamine + CO2. It participates in phospholipid metabolism; phosphatidylethanolamine biosynthesis; phosphatidylethanolamine from CDP-diacylglycerol: step 2/2. In terms of biological role, catalyzes the formation of phosphatidylethanolamine (PtdEtn) from phosphatidylserine (PtdSer). This Salmonella arizonae (strain ATCC BAA-731 / CDC346-86 / RSK2980) protein is Phosphatidylserine decarboxylase proenzyme.